A 264-amino-acid polypeptide reads, in one-letter code: Isoprenyl transferase (264 aa).

Aspartate 43 is a catalytic residue. Mg(2+) is bound at residue aspartate 43. Residues 44-47 (GNGR), tryptophan 48, arginine 56, histidine 60, and 88-90 (STE) contribute to the substrate site. The Proton acceptor role is filled by asparagine 91. Residues tryptophan 92, arginine 94, arginine 211, and 217–219 (RTS) each bind substrate. Mg(2+) is bound at residue glutamate 230.

This sequence belongs to the UPP synthase family. In terms of assembly, homodimer. It depends on Mg(2+) as a cofactor.

Catalyzes the condensation of isopentenyl diphosphate (IPP) with allylic pyrophosphates generating different type of terpenoids. The protein is Isoprenyl transferase of Bifidobacterium longum (strain NCC 2705).